A 457-amino-acid chain; its full sequence is Arginine biosynthesis bifunctional protein ArgJ, mitochondrial (457 aa).

Residues threonine 184, lysine 213, threonine 224, glutamate 312, asparagine 452, and threonine 457 each contribute to the substrate site. The active-site Nucleophile is threonine 224.

Belongs to the ArgJ family. As to quaternary structure, heterodimer of an alpha and a beta chain. In terms of processing, the alpha and beta chains are autoproteolytically processed from a single precursor protein within the mitochondrion.

Its subcellular location is the mitochondrion matrix. The catalysed reaction is N(2)-acetyl-L-ornithine + L-glutamate = N-acetyl-L-glutamate + L-ornithine. It carries out the reaction L-glutamate + acetyl-CoA = N-acetyl-L-glutamate + CoA + H(+). The protein operates within amino-acid biosynthesis; L-arginine biosynthesis; L-ornithine and N-acetyl-L-glutamate from L-glutamate and N(2)-acetyl-L-ornithine (cyclic): step 1/1. It participates in amino-acid biosynthesis; L-arginine biosynthesis; N(2)-acetyl-L-ornithine from L-glutamate: step 1/4. Its function is as follows. Catalyzes two activities which are involved in the cyclic version of arginine biosynthesis: the synthesis of acetylglutamate from glutamate and acetyl-CoA, and of ornithine by transacetylation between acetylornithine and glutamate. In Aspergillus terreus (strain NIH 2624 / FGSC A1156), this protein is Arginine biosynthesis bifunctional protein ArgJ, mitochondrial.